Here is a 396-residue protein sequence, read N- to C-terminus: Trypacidin cluster transcription factor (396 aa).

Residues 20 to 47 (CRACGLSKVRCSKEKPTCSRCRRRGTVC) constitute a DNA-binding region (zn(2)-C6 fungal-type). 3 disordered regions span residues 54-120 (RPGR…LSTV), 190-218 (DPAP…ESEA), and 346-365 (MHGA…PAPL). Residues 57 to 71 (RKPDSRSEVEPEPGH) show a composition bias toward basic and acidic residues. The segment covering 72–82 (LSHPLPSPESS) has biased composition (low complexity).

In terms of tissue distribution, specifically expressed in conidia.

It localises to the nucleus. Functionally, transcription factor that regulates the expression of the gene clusters that mediate the biosynthesis of trypacidin, a metabolite with antiprotozoal activity and a possible role in the infection process. Trypacidin is toxic for human pulmonary and bronchial epithelial cells by initiating the intracellular formation of nitric oxide (NO) and hydrogen peroxide (H(2)O(2)), thus triggering host necrotic cell death. This chain is Trypacidin cluster transcription factor, found in Aspergillus fumigatus (strain ATCC MYA-4609 / CBS 101355 / FGSC A1100 / Af293) (Neosartorya fumigata).